The following is a 394-amino-acid chain: Methionine import ATP-binding protein MetN 2 (394 aa).

The region spanning 39-278 is the ABC transporter domain; the sequence is VSLEQVGKVF…PRHGATRALL (240 aa). 75–82 provides a ligand contact to ATP; the sequence is GRSGAGKS.

This sequence belongs to the ABC transporter superfamily. Methionine importer (TC 3.A.1.24) family. As to quaternary structure, the complex is composed of two ATP-binding proteins (MetN), two transmembrane proteins (MetI) and a solute-binding protein (MetQ).

The protein localises to the cell inner membrane. The enzyme catalyses L-methionine(out) + ATP + H2O = L-methionine(in) + ADP + phosphate + H(+). The catalysed reaction is D-methionine(out) + ATP + H2O = D-methionine(in) + ADP + phosphate + H(+). Its function is as follows. Part of the ABC transporter complex MetNIQ involved in methionine import. Responsible for energy coupling to the transport system. The sequence is that of Methionine import ATP-binding protein MetN 2 from Burkholderia cenocepacia (strain HI2424).